The chain runs to 840 residues: MSAFRLWPGLLIMLGSLCHRGSPCGLSTHVEIGHRALEFLQLHNGRVNYRELLLEHQDAYQAGIVFPDCFYPSICKGGKFHDVSESTHWTPFLNASVHYIRENYPLPWEKDTEKLVAFLFGITSHMAADVSWHSLGLEQGFLRTMGAIDFHGSYSEAHSAGDFGGDVLSQFEFNFNYLARRWYVPVKDLLGIYEKLYGRKVITENVIVDCSHIQFLEMYGEMLAVSKLYPTYSTKSPFLVEQFQEYFLGGLDDMAFWSTNIYHLTSFMLENGTSDCNLPENPLFIACGGQQNHTQGSKMQKNDFHRNLTTSLTESVDRNINYTERGVFFSVNSWTPDSMSFIYKALERNIRTMFIGGSQLSQKHVSSPLASYFLSFPYARLGWAMTSADLNQDGHGDLVVGAPGYSRPGHIHIGRVYLIYGNDLGLPPVDLDLDKEAHRILEGFQPSGRFGSALAVLDFNVDGVPDLAVGAPSVGSEQLTYKGAVYVYFGSKQGGMSSSPNITISCQDIYCNLGWTLLAADVNGDSEPDLVIGSPFAPGGGKQKGIVAAFYSGPSLSDKEKLNVEAANWTVRGEEDFSWFGYSLHGVTVDNRTLLLVGSPTWKNASRLGHLLHIRDEKKSLGRVYGYFPPNGQSWFTISGDKAMGKLGTSLSSGHVLMNGTLKQVLLVGAPTYDDVSKVAFLTVTLHQGGATRMYALTSDAQPLLLSTFSGDRRFSRFGGVLHLSDLDDDGLDEIIMAAPLRIADVTSGLIGGEDGRVYVYNGKETTLGDMTGKCKSWITPCPEEKAQYVLISPEASSRFGSSLITVRSKAKNQVVIAAGRSSLGARLSGALHVYSLGSD.

The signal sequence occupies residues 1–23 (MSAFRLWPGLLIMLGSLCHRGSP). N-linked (GlcNAc...) asparagine glycosylation is found at N94, N271, N292, N307, and N321. 7 FG-GAP repeats span residues 367-428 (SPLA…GLPP), 436-497 (EAHR…GGMS), 499-559 (SPNI…LSDK), 563-623 (NVEA…SLGR), 633-693 (QSWF…GATR), 704-770 (LLLS…TLGD), and 788-840 (QYVL…LGSD). Residues N501, N568, N591, N604, and N659 are each glycosylated (N-linked (GlcNAc...) asparagine).

It belongs to the GPLD1 family. In terms of assembly, monomer.

The protein localises to the secreted. It carries out the reaction a 6-(alpha-D-glucosaminyl)-1-(1,2-diacyl-sn-glycero-3-phospho)-1D-myo-inositol + H2O = 6-(alpha-D-glucosaminyl)-1D-myo-inositol + a 1,2-diacyl-sn-glycero-3-phosphate + H(+). Its function is as follows. This protein hydrolyzes the inositol phosphate linkage in proteins anchored by phosphatidylinositol glycans (GPI-anchor) thus releasing these proteins from the membrane. The polypeptide is Phosphatidylinositol-glycan-specific phospholipase D (GPLD1) (Homo sapiens (Human)).